The sequence spans 693 residues: Histone-lysine N-methyltransferase, H3 lysine-9 specific SUVH7 (693 aa).

2 disordered regions span residues 64–99 (WYDGDAGPSSTGPIKREASDNTNDTAHNTFAPPPEM) and 111–175 (DSSN…AETE). A DNA-binding region (a.T hook) is located at residues 129-141 (KRGRGRPKGSKNS). In terms of domain architecture, YDG spans 227 to 373 (GAVPGIHVGD…FKEFRFKLVR (147 aa)). The 63-residue stretch at 454–516 (QSLGCQNCRH…HCPTRLVQTG (63 aa)) folds into the Pre-SET domain. Residues Cys-458, Cys-461, Cys-466, Cys-471, Cys-473, Cys-498, Cys-502, Cys-504, and Cys-508 each contribute to the Zn(2+) site. One can recognise an SET domain in the interval 519 to 660 (LHLEVFKTRN…PMTELTYDYG (142 aa)). S-adenosyl-L-methionine contacts are provided by residues 529–531 (CGW), Asp-562, Tyr-564, Arg-614, and 617–618 (NH). Zn(2+)-binding residues include Cys-620, Cys-681, Cys-683, and Cys-688. The Post-SET domain occupies 677 to 693 (GKKTCLCGSVKCRGSFT).

The protein belongs to the class V-like SAM-binding methyltransferase superfamily. Histone-lysine methyltransferase family. Suvar3-9 subfamily.

It localises to the nucleus. Its subcellular location is the chromosome. The protein localises to the centromere. The enzyme catalyses N(6)-methyl-L-lysyl(9)-[histone H3] + S-adenosyl-L-methionine = N(6),N(6)-dimethyl-L-lysyl(9)-[histone H3] + S-adenosyl-L-homocysteine + H(+). It carries out the reaction L-lysyl(9)-[histone H3] + S-adenosyl-L-methionine = N(6)-methyl-L-lysyl(9)-[histone H3] + S-adenosyl-L-homocysteine + H(+). In terms of biological role, histone methyltransferase. Methylates 'Lys-9' of histone H3. H3 'Lys-9' methylation represents a specific tag for epigenetic transcriptional repression. The chain is Histone-lysine N-methyltransferase, H3 lysine-9 specific SUVH7 (SUVH7) from Arabidopsis thaliana (Mouse-ear cress).